The following is a 414-amino-acid chain: 2-epi-5-epi-valiolone synthase (414 aa).

NAD(+) contacts are provided by residues aspartate 70, 101 to 104 (ESAK), 134 to 138 (GVLTD), 158 to 159 (TT), lysine 171, lysine 180, and 198 to 201 (FLAT). Lysine 171 is a catalytic residue. Glutamate 213, histidine 284, and histidine 300 together coordinate Zn(2+).

Belongs to the sugar phosphate cyclases superfamily. EEVS family. The cofactor is NAD(+). Zn(2+) is required as a cofactor.

It carries out the reaction D-sedoheptulose 7-phosphate = 2-epi-5-epi-valiolone + phosphate. The protein operates within antibiotic biosynthesis. Its function is as follows. Catalyzes the cyclization of D-sedoheptulose 7-phosphate to 2-epi-5-epi-valiolone. Involved in validamycin biosynthesis. The protein is 2-epi-5-epi-valiolone synthase of Streptomyces hygroscopicus subsp. jinggangensis (strain 5008).